Consider the following 232-residue polypeptide: Large ribosomal subunit protein uL1 (232 aa).

This sequence belongs to the universal ribosomal protein uL1 family. As to quaternary structure, part of the 50S ribosomal subunit.

Binds directly to 23S rRNA. The L1 stalk is quite mobile in the ribosome, and is involved in E site tRNA release. In terms of biological role, protein L1 is also a translational repressor protein, it controls the translation of the L11 operon by binding to its mRNA. The polypeptide is Large ribosomal subunit protein uL1 (Methylorubrum populi (strain ATCC BAA-705 / NCIMB 13946 / BJ001) (Methylobacterium populi)).